Consider the following 366-residue polypeptide: Histidinol-phosphate aminotransferase (366 aa).

The residue at position 222 (lysine 222) is an N6-(pyridoxal phosphate)lysine.

The protein belongs to the class-II pyridoxal-phosphate-dependent aminotransferase family. Histidinol-phosphate aminotransferase subfamily. As to quaternary structure, homodimer. Pyridoxal 5'-phosphate is required as a cofactor.

The catalysed reaction is L-histidinol phosphate + 2-oxoglutarate = 3-(imidazol-4-yl)-2-oxopropyl phosphate + L-glutamate. Its pathway is amino-acid biosynthesis; L-histidine biosynthesis; L-histidine from 5-phospho-alpha-D-ribose 1-diphosphate: step 7/9. In Lysinibacillus sphaericus (strain C3-41), this protein is Histidinol-phosphate aminotransferase.